The primary structure comprises 748 residues: E3 ubiquitin-protein ligase SMURF2 (748 aa).

Residues 1–119 (MSNPGGRRNG…TGYQRLDLCK (119 aa)) form the C2 domain. K119 participates in a covalent cross-link: Glycyl lysine isopeptide (Lys-Gly) (interchain with G-Cter in ubiquitin). 3 consecutive WW domains span residues 157 to 190 (NDLPDGWEERRTASGRIQYLNHITRTTQWERPTR), 251 to 284 (PDLPEGYEQRTTQQGQVYFLHTQTGVSTWHDPRV), and 297 to 330 (GPLPPGWEIRNTATGRVYFVDHNNRTTQFTDPRL). One can recognise an HECT domain in the interval 414–748 (RPKDLWKRLM…IEETCGFAVE (335 aa)). The Glycyl thioester intermediate role is filled by C716.

Interacts (via WW domains) with SMAD1. Interacts (via WW domains) with SMAD2 (via PY-motif). Interacts (via WW domains) with SMAD3 (via PY-motif). Interacts with SMAD6. Interacts with SMAD7 (via PY-motif) and TGFBR1; SMAD7 recruits SMURF2 to the TGF-beta receptor and regulates its degradation. Does not interact with SMAD4; SMAD4 lacks a PY-motif. Interacts with AIMP1. Interacts with NDFIP1 and NDFIP2; this interaction activates the E3 ubiquitin-protein ligase. Interacts with TTC3. In terms of processing, auto-ubiquitinated and ubiquitinated in the presence of RNF11 and UBE2D1. Ubiquitinated by the SCF(FBXL15) complex and TTC3, leading to its degradation by the proteasome. 'Lys-48'-linked polyubiquitination mediated by TRAF4 at Lys-119 leads to SMURF2 proteasomal degradation.

It localises to the nucleus. The protein localises to the cytoplasm. It is found in the cell membrane. Its subcellular location is the membrane raft. It catalyses the reaction S-ubiquitinyl-[E2 ubiquitin-conjugating enzyme]-L-cysteine + [acceptor protein]-L-lysine = [E2 ubiquitin-conjugating enzyme]-L-cysteine + N(6)-ubiquitinyl-[acceptor protein]-L-lysine.. Its pathway is protein modification; protein ubiquitination. Its activity is regulated as follows. Activated by NDFIP1- and NDFIP2-binding. Functionally, E3 ubiquitin-protein ligase which accepts ubiquitin from an E2 ubiquitin-conjugating enzyme in the form of a thioester and then directly transfers the ubiquitin to targeted substrates. Interacts with SMAD7 to trigger SMAD7-mediated transforming growth factor beta/TGF-beta receptor ubiquitin-dependent degradation, thereby down-regulating TGF-beta signaling. In addition, interaction with SMAD7 activates autocatalytic degradation, which is prevented by interaction with AIMP1. Also forms a stable complex with TGF-beta receptor-mediated phosphorylated SMAD1, SMAD2 and SMAD3, and targets SMAD1 and SMAD2 for ubiquitination and proteasome-mediated degradation. SMAD2 may recruit substrates, such as SNON, for ubiquitin-dependent degradation. Negatively regulates TGFB1-induced epithelial-mesenchymal transition and myofibroblast differentiation. This is E3 ubiquitin-protein ligase SMURF2 from Mus musculus (Mouse).